Here is a 212-residue protein sequence, read N- to C-terminus: Ribonuclease P protein component 3 (212 aa).

It belongs to the eukaryotic/archaeal RNase P protein component 3 family. As to quaternary structure, consists of a catalytic RNA component and at least 4-5 protein subunits.

The protein localises to the cytoplasm. It catalyses the reaction Endonucleolytic cleavage of RNA, removing 5'-extranucleotides from tRNA precursor.. Functionally, part of ribonuclease P, a protein complex that generates mature tRNA molecules by cleaving their 5'-ends. This chain is Ribonuclease P protein component 3, found in Pyrococcus abyssi (strain GE5 / Orsay).